A 497-amino-acid polypeptide reads, in one-letter code: Cytochrome P450 2D6 (497 aa).

Substrate is bound at residue D301. Position 443 (C443) interacts with heme.

The protein belongs to the cytochrome P450 family. Requires heme as cofactor.

The protein resides in the endoplasmic reticulum membrane. It is found in the microsome membrane. The enzyme catalyses (5Z,8Z,11Z,14Z)-eicosatetraenoate + reduced [NADPH--hemoprotein reductase] + O2 = (8R,9S)-epoxy-(5Z,11Z,14Z)-eicosatrienoate + oxidized [NADPH--hemoprotein reductase] + H2O + H(+). It carries out the reaction (5Z,8Z,11Z,14Z)-eicosatetraenoate + reduced [NADPH--hemoprotein reductase] + O2 = (11R,12S)-epoxy-(5Z,8Z,14Z)-eicosatrienoate + oxidized [NADPH--hemoprotein reductase] + H2O + H(+). The catalysed reaction is (5Z,8Z,11Z,14Z)-eicosatetraenoate + reduced [NADPH--hemoprotein reductase] + O2 = (14S,15R)-epoxy-(5Z,8Z,11Z)-eicosatrienoate + oxidized [NADPH--hemoprotein reductase] + H2O + H(+). It catalyses the reaction N-(5Z,8Z,11Z,14Z-eicosatetraenoyl)-ethanolamine + reduced [NADPH--hemoprotein reductase] + O2 = N-(8,9-epoxy-5Z,11Z,14Z-eicosatrienoyl)-ethanolamine + oxidized [NADPH--hemoprotein reductase] + H2O + H(+). The enzyme catalyses N-(5Z,8Z,11Z,14Z-eicosatetraenoyl)-ethanolamine + reduced [NADPH--hemoprotein reductase] + O2 = N-(11,12-epoxy-5Z,8Z,14Z-eicosatrienoyl)-ethanolamine + oxidized [NADPH--hemoprotein reductase] + H2O + H(+). It carries out the reaction N-(5Z,8Z,11Z,14Z-eicosatetraenoyl)-ethanolamine + reduced [NADPH--hemoprotein reductase] + O2 = N-(14,15-epoxy-5Z,8Z,11Z-eicosatrienoyl)-ethanolamine + oxidized [NADPH--hemoprotein reductase] + H2O + H(+). The catalysed reaction is N-(5Z,8Z,11Z,14Z-eicosatetraenoyl)-ethanolamine + reduced [NADPH--hemoprotein reductase] + O2 = N-(20-hydroxy-5Z,8Z,11Z,14Z-eicosatetraenoyl)-ethanolamine + oxidized [NADPH--hemoprotein reductase] + H2O + H(+). It catalyses the reaction (5Z,8Z,11Z,14Z,17Z)-eicosapentaenoate + reduced [NADPH--hemoprotein reductase] + O2 = (17S,18R)-epoxy-(5Z,8Z,11Z,14Z)-eicosatetraenoate + oxidized [NADPH--hemoprotein reductase] + H2O + H(+). The enzyme catalyses (4Z,7Z,10Z,13Z,16Z,19Z)-docosahexaenoate + reduced [NADPH--hemoprotein reductase] + O2 = (19R,20S)-epoxy-(4Z,7Z,10Z,13Z,16Z)-docosapentaenoate + oxidized [NADPH--hemoprotein reductase] + H2O + H(+). It carries out the reaction (4Z,7Z,10Z,13Z,16Z,19Z)-docosahexaenoate + reduced [NADPH--hemoprotein reductase] + O2 = (19S,20R)-epoxy-(4Z,7Z,10Z,13Z,16Z)-docosapentaenoate + oxidized [NADPH--hemoprotein reductase] + H2O + H(+). The catalysed reaction is cholesterol + reduced [NADPH--hemoprotein reductase] + O2 = 25-hydroxycholesterol + oxidized [NADPH--hemoprotein reductase] + H2O + H(+). It catalyses the reaction all-trans-retinol + reduced [NADPH--hemoprotein reductase] + O2 = all-trans-retinal + oxidized [NADPH--hemoprotein reductase] + 2 H2O + H(+). The protein operates within cofactor metabolism; retinol metabolism. Its pathway is lipid metabolism; fatty acid metabolism. It functions in the pathway steroid metabolism; cholesterol metabolism. Functionally, a cytochrome P450 monooxygenase involved in the metabolism of fatty acids, steroids and retinoids. Mechanistically, uses molecular oxygen inserting one oxygen atom into a substrate, and reducing the second into a water molecule, with two electrons provided by NADPH via cytochrome P450 reductase (NADPH--hemoprotein reductase). Catalyzes the epoxidation of double bonds of polyunsaturated fatty acids (PUFA). Metabolizes endocannabinoid arachidonoylethanolamide (anandamide) to 20-hydroxyeicosatetraenoic acid ethanolamide (20-HETE-EA) and 8,9-, 11,12-, and 14,15-epoxyeicosatrienoic acid ethanolamides (EpETrE-EAs), potentially modulating endocannabinoid system signaling. Catalyzes the hydroxylation of carbon-hydrogen bonds. Metabolizes cholesterol toward 25-hydroxycholesterol, a physiological regulator of cellular cholesterol homeostasis. Catalyzes the oxidative transformations of all-trans retinol to all-trans retinal, a precursor for the active form all-trans-retinoic acid. Also involved in the oxidative metabolism of drugs such as antiarrhythmics, adrenoceptor antagonists, and tricyclic antidepressants. This Homo sapiens (Human) protein is Cytochrome P450 2D6.